The chain runs to 102 residues: ATP-dependent Clp protease adapter protein ClpS (102 aa).

This sequence belongs to the ClpS family. As to quaternary structure, binds to the N-terminal domain of the chaperone ClpA.

Its function is as follows. Involved in the modulation of the specificity of the ClpAP-mediated ATP-dependent protein degradation. This chain is ATP-dependent Clp protease adapter protein ClpS, found in Shewanella denitrificans (strain OS217 / ATCC BAA-1090 / DSM 15013).